The primary structure comprises 912 residues: Eukaryotic translation initiation factor 3 subunit C (912 aa).

The disordered stretch occupies residues 1–44; it reads MSRFFTTGSDSESESSLSGEELVTKPVGGNYGKQPLLLSEDEED. Residues 8-21 are compositionally biased toward low complexity; it reads GSDSESESSLSGEE. A phosphoserine mark is found at Ser-9, Ser-11, Ser-13, Ser-15, Ser-16, Ser-18, and Ser-39. Position 99 is an N6-acetyllysine (Lys-99). Disordered stretches follow at residues 157 to 305 and 521 to 541; these read TNYK…RVRG and QLTPPEGSSKSEQDQAENEGE. 4 positions are modified to phosphoserine: Ser-166, Ser-178, Ser-181, and Ser-182. Over residues 166-190 the composition is skewed to acidic residues; sequence SADEDAEKNEEDSEGSSDEDEDDDG. Basic and acidic residues predominate over residues 199–215; it reads KKSEAPSGDSRKFLKKE. Residues 216-229 show a composition bias toward acidic residues; sequence DEDEDSEESEDSEA. Basic and acidic residues predominate over residues 260–277; it reads PTTEEDKKAAEKKREDKA. Residues 521-530 show a composition bias toward polar residues; sequence QLTPPEGSSK. Thr-523 is subject to Phosphothreonine. An N6-acetyllysine modification is found at Lys-642. The region spanning 672–848 is the PCI domain; sequence FHLHINLELL…QTVVMHRTEP (177 aa). Residues 884-912 form a disordered region; it reads FRDQKDGYRKNEGYMRRGGYRQQQSQTAY. The span at 885-898 shows a compositional bias: basic and acidic residues; it reads RDQKDGYRKNEGYM. Position 908 is a phosphoserine (Ser-908).

It belongs to the eIF-3 subunit C family. As to quaternary structure, component of the eukaryotic translation initiation factor 3 (eIF-3) complex, which is composed of 13 subunits: EIF3A, EIF3B, EIF3C, EIF3D, EIF3E, EIF3F, EIF3G, EIF3H, EIF3I, EIF3J, EIF3K, EIF3L and EIF3M. The eIF-3 complex appears to include 3 stable modules: module A is composed of EIF3A, EIF3B, EIF3G and EIF3I; module B is composed of EIF3F, EIF3H, and EIF3M; and module C is composed of EIF3C, EIF3D, EIF3E, EIF3K and EIF3L. EIF3C of module C binds EIF3B of module A and EIF3H of module B, thereby linking the three modules. EIF3J is a labile subunit that binds to the eIF-3 complex via EIF3B. The eIF-3 complex interacts with RPS6KB1 under conditions of nutrient depletion. Mitogenic stimulation leads to binding and activation of a complex composed of MTOR and RPTOR, leading to phosphorylation and release of RPS6KB1 and binding of EIF4B to eIF-3. Identified in a HCV IRES-mediated translation complex, at least composed of EIF3C, IGF2BP1, RPS3 and HCV RNA-replicon. Interacts with ALKBH4, IFIT1 and IFIT2. Interacts with BZW2/5MP1. In terms of processing, phosphorylated. Phosphorylation is enhanced upon serum stimulation.

It is found in the cytoplasm. Its function is as follows. Component of the eukaryotic translation initiation factor 3 (eIF-3) complex, which is required for several steps in the initiation of protein synthesis. The eIF-3 complex associates with the 40S ribosome and facilitates the recruitment of eIF-1, eIF-1A, eIF-2:GTP:methionyl-tRNAi and eIF-5 to form the 43S pre-initiation complex (43S PIC). The eIF-3 complex stimulates mRNA recruitment to the 43S PIC and scanning of the mRNA for AUG recognition. The eIF-3 complex is also required for disassembly and recycling of post-termination ribosomal complexes and subsequently prevents premature joining of the 40S and 60S ribosomal subunits prior to initiation. The eIF-3 complex specifically targets and initiates translation of a subset of mRNAs involved in cell proliferation, including cell cycling, differentiation and apoptosis, and uses different modes of RNA stem-loop binding to exert either translational activation or repression. The protein is Eukaryotic translation initiation factor 3 subunit C of Bos taurus (Bovine).